Reading from the N-terminus, the 624-residue chain is 1-deoxy-D-xylulose-5-phosphate synthase (624 aa).

Thiamine diphosphate contacts are provided by residues H74 and G115 to S117. Position 146 (D146) interacts with Mg(2+). Thiamine diphosphate is bound by residues G147–A148, N175, Y286, and E367. N175 contacts Mg(2+).

The protein belongs to the transketolase family. DXPS subfamily. Homodimer. Mg(2+) serves as cofactor. The cofactor is thiamine diphosphate.

The enzyme catalyses D-glyceraldehyde 3-phosphate + pyruvate + H(+) = 1-deoxy-D-xylulose 5-phosphate + CO2. Its pathway is metabolic intermediate biosynthesis; 1-deoxy-D-xylulose 5-phosphate biosynthesis; 1-deoxy-D-xylulose 5-phosphate from D-glyceraldehyde 3-phosphate and pyruvate: step 1/1. In terms of biological role, catalyzes the acyloin condensation reaction between C atoms 2 and 3 of pyruvate and glyceraldehyde 3-phosphate to yield 1-deoxy-D-xylulose-5-phosphate (DXP). The sequence is that of 1-deoxy-D-xylulose-5-phosphate synthase from Alkaliphilus oremlandii (strain OhILAs) (Clostridium oremlandii (strain OhILAs)).